Reading from the N-terminus, the 395-residue chain is Flap endonuclease 1 (395 aa).

The tract at residues 1–104 is N-domain; the sequence is MGIKHLYQII…GELAKRFMRK (104 aa). A Mg(2+)-binding site is contributed by aspartate 34. Arginine 47 and arginine 70 together coordinate DNA. Mg(2+) contacts are provided by aspartate 86, glutamate 158, glutamate 160, aspartate 179, and aspartate 181. Positions 122–253 are I-domain; that stretch reads EVEKFSRRTV…NTALKLIRDH (132 aa). Glutamate 158 provides a ligand contact to DNA. Residues glycine 231 and aspartate 233 each contribute to the DNA site. Residue aspartate 233 participates in Mg(2+) binding. The segment at 341 to 349 is interaction with PCNA; that stretch reads QQSRLEGFF. Residues 360 to 389 show a composition bias toward basic and acidic residues; that stretch reads AVLKRKHEEKLELQKKKKKEDAKAKKEAKS. The segment at 360–395 is disordered; sequence AVLKRKHEEKLELQKKKKKEDAKAKKEAKSKPRGTT.

Belongs to the XPG/RAD2 endonuclease family. FEN1 subfamily. Interacts with PCNA. Three molecules of FEN1 bind to one PCNA trimer with each molecule binding to one PCNA monomer. PCNA stimulates the nuclease activity without altering cleavage specificity. Mg(2+) is required as a cofactor. Phosphorylated. Phosphorylation upon DNA damage induces relocalization to the nuclear plasma.

Its subcellular location is the nucleus. The protein resides in the nucleolus. It localises to the nucleoplasm. It is found in the mitochondrion. In terms of biological role, structure-specific nuclease with 5'-flap endonuclease and 5'-3' exonuclease activities involved in DNA replication and repair. During DNA replication, cleaves the 5'-overhanging flap structure that is generated by displacement synthesis when DNA polymerase encounters the 5'-end of a downstream Okazaki fragment. It enters the flap from the 5'-end and then tracks to cleave the flap base, leaving a nick for ligation. Also involved in the long patch base excision repair (LP-BER) pathway, by cleaving within the apurinic/apyrimidinic (AP) site-terminated flap. Acts as a genome stabilization factor that prevents flaps from equilibrating into structures that lead to duplications and deletions. Also possesses 5'-3' exonuclease activity on nicked or gapped double-stranded DNA, and exhibits RNase H activity. Also involved in replication and repair of rDNA and in repairing mitochondrial DNA. The polypeptide is Flap endonuclease 1 (Ajellomyces capsulatus (strain NAm1 / WU24) (Darling's disease fungus)).